Reading from the N-terminus, the 101-residue chain is Urease subunit beta (101 aa).

This sequence belongs to the urease beta subunit family. Heterotrimer of UreA (gamma), UreB (beta) and UreC (alpha) subunits. Three heterotrimers associate to form the active enzyme.

It is found in the cytoplasm. The enzyme catalyses urea + 2 H2O + H(+) = hydrogencarbonate + 2 NH4(+). Its pathway is nitrogen metabolism; urea degradation; CO(2) and NH(3) from urea (urease route): step 1/1. The polypeptide is Urease subunit beta (Leptothrix cholodnii (strain ATCC 51168 / LMG 8142 / SP-6) (Leptothrix discophora (strain SP-6))).